We begin with the raw amino-acid sequence, 98 residues long: NADH-ubiquinone oxidoreductase chain 4L (98 aa).

The next 3 membrane-spanning stretches (helical) occupy residues methionine 1–isoleucine 21, serine 29–leucine 49, and isoleucine 58–leucine 78.

It belongs to the complex I subunit 4L family. Core subunit of respiratory chain NADH dehydrogenase (Complex I) which is composed of 45 different subunits.

The protein localises to the mitochondrion inner membrane. The enzyme catalyses a ubiquinone + NADH + 5 H(+)(in) = a ubiquinol + NAD(+) + 4 H(+)(out). In terms of biological role, core subunit of the mitochondrial membrane respiratory chain NADH dehydrogenase (Complex I) which catalyzes electron transfer from NADH through the respiratory chain, using ubiquinone as an electron acceptor. Part of the enzyme membrane arm which is embedded in the lipid bilayer and involved in proton translocation. The polypeptide is NADH-ubiquinone oxidoreductase chain 4L (MT-ND4L) (Colobus guereza (Mantled guereza)).